The following is a 189-amino-acid chain: uncharacterized protein (189 aa).

Residues 31–54 (KCENIDDLANRYEVSKQEVEKVFK) adopt a coiled-coil conformation. 4 EF-hand domains span residues 47–82 (QEVE…LGID), 83–118 (VSPK…KIKL), 120–155 (TVKA…TVST), and 157–189 (ITVK…CQTV). Positions 60, 62, 64, 66, 71, 96, 98, 100, 102, 107, 133, 135, 137, and 144 each coordinate Ca(2+).

This is an uncharacterized protein from Caenorhabditis elegans.